Reading from the N-terminus, the 180-residue chain is Ribulose bisphosphate carboxylase small subunit, chloroplastic 3 (180 aa).

The transit peptide at 1–56 directs the protein to the chloroplast; the sequence is MASSLMSNAITAVVGASGAQANMVAPFNGLKSIASFPVTRKSNDITSIASNGGRVQ.

It belongs to the RuBisCO small chain family. Heterohexadecamer of 8 large and 8 small subunits.

It is found in the plastid. The protein localises to the chloroplast. Functionally, ruBisCO catalyzes two reactions: the carboxylation of D-ribulose 1,5-bisphosphate, the primary event in carbon dioxide fixation, as well as the oxidative fragmentation of the pentose substrate. Both reactions occur simultaneously and in competition at the same active site. Although the small subunit is not catalytic it is essential for maximal activity. This is Ribulose bisphosphate carboxylase small subunit, chloroplastic 3 from Amaranthus hypochondriacus (Prince-of-Wales feather).